The chain runs to 499 residues: Circadian clock oscillator protein KaiC (499 aa).

2 consecutive KaiC domains span residues 1–243 and 257–499; these read MQSS…VSVF and VRIS…DERA. ATP is bound by residues Gly45, Thr46, Gly47, Lys48, Thr49, Ser85, Lys220, Leu221, Arg222, Thr224, His226, Thr286, Gly287, Thr288, Gly289, Lys290, Thr291, and Leu292. Mg(2+) is bound at residue Thr49. Residue Thr291 participates in Mg(2+) binding. Glu314 provides a ligand contact to Mg(2+). Trp327 contacts ATP. Ser427 carries the post-translational modification Phosphoserine; by autocatalysis. At Thr428 the chain carries Phosphothreonine; by autocatalysis. Positions 447, 453, 454, 455, 457, 459, and 461 each coordinate ATP.

It belongs to the KaiC family. In terms of assembly, homohexamer; hexamerization is dependent on ATP-binding. Component of the KaiBC complex. KaiC interacts with SasA, activating its autokinase function and leading to RpaA activation. Mg(2+) is required as a cofactor. In terms of processing, phosphorylated on serine and threonine residues by autocatalysis. Has a 4 step phosphorylation cycle; the autokinase acts first on Thr-428, then Ser-427. When Ser-427 is modified KaiC switches to an autophosphatase mode, acting first on phospho-Thr-428 then phospho-Ser-427.

It carries out the reaction L-seryl-[protein] + ATP = O-phospho-L-seryl-[protein] + ADP + H(+). The enzyme catalyses L-threonyl-[protein] + ATP = O-phospho-L-threonyl-[protein] + ADP + H(+). It catalyses the reaction ATP + H2O = ADP + phosphate + H(+). Central component of the KaiBC oscillator complex, which constitutes the main circadian regulator in cyanobacteria. Its composition changes during the circadian cycle to control KaiC phosphorylation. Autophosphorylates and has a weak ATPase activity; ATPase activity defines the circadian period. This chain is Circadian clock oscillator protein KaiC, found in Prochlorococcus marinus (strain MIT 9313).